A 3942-amino-acid chain; its full sequence is Protein bassoon (3942 aa).

Residues 1–158 (MGNEASLEGG…PTSPYSVPQI (158 aa)) are disordered. Gly-2 carries the N-myristoyl glycine lipid modification. Residues 9–29 (GGAGEGPLPPGGSGLGPGPGA) show a composition bias toward gly residues. The span at 31 to 52 (KPPSALAGGGQLPVAGAARAAG) shows a compositional bias: low complexity. The span at 53 to 71 (PPTPGLGPVPGPGPGPGPG) shows a compositional bias: pro residues. A 5 X 2 AA tandem repeats of P-G region spans residues 62 to 71 (PGPGPGPGPG). Composition is skewed to polar residues over residues 85-98 (SQRT…QASA) and 127-154 (QVDS…SPYS). A Phosphoserine modification is found at Ser-142. An Omega-N-methylarginine modification is found at Arg-145. 2 consecutive C4-type zinc fingers follow at residues 167–190 (CPIC…CTQC) and 195–217 (CNQC…CLNC). Disordered regions lie at residues 228 to 341 (TTAP…EQTQ) and 362 to 457 (LMSV…KTMP). A compositionally biased stretch (polar residues) spans 230-240 (APRSKSQQQLH). Phosphoserine occurs at positions 241 and 245. Residues 362–379 (LMSVQPEADTQGQPSPSK) are compositionally biased toward polar residues. Pro residues predominate over residues 395 to 407 (PRPPGSGPGPGPT). 2 consecutive C4-type zinc fingers follow at residues 464-487 (CPLC…CTAC) and 492-514 (CNLC…CLNC). Disordered stretches follow at residues 525–937 (GEPA…LQGG), 950–1258 (GSYG…VAES), 1309–1553 (MDPM…WQQS), and 1573–1625 (RMVH…PSAG). Residues 528–541 (APLPLPTPQQPPAG) are compositionally biased toward pro residues. 5 consecutive repeat copies span residues 570 to 576 (KASPQAT), 577 to 583 (KASPQAT), 584 to 590 (KASPQAT), 591 to 597 (KASPQTT), and 598 to 604 (KASPQAK). Residues 570-604 (KASPQATKASPQATKASPQATKASPQTTKASPQAK) are 5 X 7 AA tandem repeats of K-A-S-P-Q-[AT]-[AT]. Polar residues predominate over residues 573 to 600 (PQATKASPQATKASPQATKASPQTTKAS). Residues 632-645 (VPKPPPETTVPPGT) show a composition bias toward pro residues. Residues 684–693 (QDLSRSPQSL) show a composition bias toward polar residues. Residues 694 to 708 (SDTGYSSDGVSSSQS) show a composition bias toward low complexity. The segment covering 709–718 (EITGVVQQEV) has biased composition (polar residues). Acidic residues-rich tracts occupy residues 787–802 (FDSD…EDDS) and 865–876 (SAEEDNLEEDDT). Omega-N-methylarginine is present on Arg-881. Basic and acidic residues predominate over residues 895 to 905 (PRPESSQEPKR). Ser-980 is modified (phosphoserine). Low complexity predominate over residues 994–1011 (PASTPSYTSGTSPTSLSS). Acidic residues predominate over residues 1049–1062 (DSSEEEELREEEEL). 2 positions are modified to phosphoserine: Ser-1050 and Ser-1051. The span at 1063 to 1076 (LREQEKMREVEQQR) shows a compositional bias: basic and acidic residues. Ser-1100 carries the post-translational modification Phosphoserine. Residue Thr-1102 is modified to Phosphothreonine. Phosphoserine is present on residues Ser-1108 and Ser-1114. The segment covering 1117–1132 (EELRQAAEMEELHRSS) has biased composition (basic and acidic residues). Composition is skewed to low complexity over residues 1133–1143 (CSEYSPSPSLD) and 1173–1190 (SPTE…SGRP). The segment covering 1192-1207 (KSAEEAYEDMMRKAEM) has biased composition (basic and acidic residues). Over residues 1209-1219 (QRQQGQVAGAR) the composition is skewed to low complexity. Polar residues predominate over residues 1226 to 1240 (SQPTGPRSQGSFEYQ). The residue at position 1236 (Ser-1236) is a Phosphoserine. Low complexity predominate over residues 1333–1343 (SFSTSTSSDSS). A glycan (O-linked (GlcNAc) threonine) is linked at Thr-1354. Over residues 1357-1366 (FAKEPQDPLK) the composition is skewed to basic and acidic residues. Polar residues predominate over residues 1370 to 1438 (SPVSSTLTSK…TTANYGSQTE (69 aa)). An O-linked (GlcNAc) threonine glycan is attached at Thr-1395. Phosphoserine is present on residues Ser-1482, Ser-1491, and Ser-1493. The segment covering 1488-1498 (STPSESPTFSP) has biased composition (low complexity). Composition is skewed to polar residues over residues 1508-1522 (EFST…SSDI) and 1573-1609 (RMVH…SQMP). An O-linked (GlcNAc) serine glycan is attached at Ser-1707. Omega-N-methylarginine is present on residues Arg-1792 and Arg-1796. At Arg-1806 the chain carries Asymmetric dimethylarginine; alternate. The residue at position 1806 (Arg-1806) is an Omega-N-methylarginine; alternate. An Omega-N-methylarginine modification is found at Arg-1818. 2 disordered regions span residues 1831–1865 (GVGL…TRKP) and 1926–1977 (PSAP…QRPY). Over residues 1844–1856 (AEPHRATPAELRS) the composition is skewed to basic and acidic residues. Thr-1934 is a glycosylation site (O-linked (GlcNAc) threonine). 2 positions are modified to phosphoserine: Ser-1990 and Ser-2046. 2 positions are modified to omega-N-methylarginine: Arg-2051 and Arg-2081. An asymmetric dimethylarginine mark is found at Arg-2255, Arg-2265, and Arg-2270. O-linked (GlcNAc) threonine glycosylation is present at Thr-2318. Disordered regions lie at residues 2327–2378 (PVAP…KQQE), 2476–2504 (EQKQ…TELA), and 2524–2663 (TEGP…STTA). Pro residues predominate over residues 2329 to 2342 (APAPGPAPAPPPGQ). Basic and acidic residues predominate over residues 2361 to 2378 (ASEKEEASQEDRQRKQQE). Coiled-coil stretches lie at residues 2366-2422 (EASQ…LVQR) and 2453-2483 (LAQQ…RQKA). Residue Thr-2524 is glycosylated (O-linked (GlcNAc) threonine). Positions 2541-2551 (SSASDMSLQTE) are enriched in polar residues. The residue at position 2578 (Ser-2578) is a Phosphoserine. Phosphothreonine is present on residues Thr-2595 and Thr-2622. Basic and acidic residues predominate over residues 2643–2655 (RHSDSGSDSKHDA). An O-linked (GlcNAc) threonine glycan is attached at Thr-2700. The segment at 2730-3278 (EPDGQAQGVA…GGVSGRPGKD (549 aa)) is interaction with DAO. Ser-2811, Ser-2860, and Ser-2866 each carry phosphoserine. The tract at residues 2854–2874 (TLQRSLSDPKPLSPTAEESAK) is disordered. Thr-2945 carries an O-linked (GlcNAc) threonine glycan. Ser-3022 is subject to Phosphoserine. Disordered regions lie at residues 3051–3409 (PATP…LTSR), 3431–3560 (YYGV…PRAH), and 3581–3917 (EAYH…KILP). Residues 3073 to 3083 (TAGSSGPTQNG) are compositionally biased toward polar residues. Low complexity predominate over residues 3089–3114 (APTYTGPSTYPAPTYPPGTGYPAEPG). The span at 3202 to 3211 (KAPEHPRGSD) shows a compositional bias: basic and acidic residues. The segment covering 3212–3237 (RSSVSQSPAPTYPSDSHYTSLEQNVP) has biased composition (polar residues). Phosphoserine is present on Ser-3301. Basic and acidic residues-rich tracts occupy residues 3330–3342 (GDSD…RADK) and 3372–3391 (QGME…KDVE). Ser-3382 carries the phosphoserine modification. The segment covering 3447–3461 (YGSSSRSRMASAYSG) has biased composition (low complexity). Positions 3464-3487 (LSSHDYSSRGKGYERERDTAERLQ) are enriched in basic and acidic residues. Arg-3502 is subject to Omega-N-methylarginine. Over residues 3520–3534 (PLGRPRPAGGALPPG) the composition is skewed to low complexity. Basic and acidic residues-rich tracts occupy residues 3549 to 3560 (VQEHVKDGPRAH) and 3592 to 3602 (WFDKPRDARSD). A compositionally biased stretch (basic residues) spans 3652-3665 (EHRHHSDHGRHSGR). Positions 3666–3690 (HAGEEPGRRAAKPHARDMGRHEARP) are enriched in basic and acidic residues. Residues 3750–3820 (TQAQPQMQGR…QARLQPQSQP (71 aa)) show a composition bias toward low complexity. Arg-3823 is modified (omega-N-methylarginine). The segment covering 3835–3851 (KPQPGPTTAPGPQPAGP) has biased composition (pro residues). The segment covering 3856 to 3891 (QASSSKPPAAKAPQQGRAPQAQTTPGPGPAGAKPGA) has biased composition (low complexity).

Interacts with PCLO, ERC2/CAST1, RIMS1 and UNC13A. Interacts with TPRG1L. Interacts with DYNLL1 and DYNLL2; these interactions potentially link PTVs to dynein and myosin V motor complexes. Interacts with ATG5; this interaction is important for the regulation of presynaptic autophagy. Interacts (via C-terminus) with TRIO (via N-terminus). Interacts with CTBP1. Interacts with SIAH1; this interaction negatively regulates SIAH1 E3 ligase activity. Interacts (via coiled region) with DAO; the interaction is direct. Myristoylated. The N-terminal myristoylation is not sufficient for presynaptic localization. In terms of tissue distribution, expressed in brain and retina.

Its subcellular location is the cytoplasm. The protein localises to the presynaptic active zone. It localises to the cytoskeleton. The protein resides in the cytoplasmic vesicle. It is found in the secretory vesicle. Its subcellular location is the synaptic vesicle membrane. Functionally, scaffold protein of the presynaptic cytomatrix at the active zone (CAZ) which is the place in the synapse where neurotransmitter is released. After synthesis, participates in the formation of Golgi-derived membranous organelles termed Piccolo-Bassoon transport vesicles (PTVs) that are transported along axons to sites of nascent synaptic contacts. At the presynaptic active zone, regulates the spatial organization of synaptic vesicle cluster, the protein complexes that execute membrane fusion and compensatory endocytosis. Also functions in processes other than assembly such as the regulation of specific presynaptic protein ubiquitination by interacting with SIAH1 or the regulation of presynaptic autophagy by associating with ATG5. Also mediates synapse to nucleus communication leading to reconfiguration of gene expression by associating with the transcriptional corepressor CTBP1 and by subsequently reducing the size of its pool available for nuclear import. Inhibits the activity of the proportion of DAO enzyme that localizes to the presynaptic active zone, which may modulate synaptic transmission. The sequence is that of Protein bassoon from Mus musculus (Mouse).